A 152-amino-acid polypeptide reads, in one-letter code: Large-conductance mechanosensitive channel (152 aa).

The next 2 membrane-spanning stretches (helical) occupy residues 14–34 (VIDL…VTSL) and 81–101 (GLFL…FIAI).

This sequence belongs to the MscL family. In terms of assembly, homopentamer.

Its subcellular location is the cell membrane. Channel that opens in response to stretch forces in the membrane lipid bilayer. May participate in the regulation of osmotic pressure changes within the cell. This is Large-conductance mechanosensitive channel from Clostridium perfringens (strain 13 / Type A).